Reading from the N-terminus, the 450-residue chain is Protein indeterminate-domain 13 (450 aa).

Ser-54 is modified (phosphoserine). C2H2-type zinc fingers lie at residues 64–86 (FFCE…KRGH) and 106–136 (YICP…SRKH). A Nuclear localization signal motif is present at residues 128–135 (IKKHFSRK). A C2H2-type 2; degenerate zinc finger spans residues 141-165 (WKCDKCSKKYAVISDWKAHNKICGS). Zn(2+)-binding residues include Cys-143, Cys-146, His-159, Cys-163, Cys-170, Cys-172, His-185, and Cys-189. Residues 168–191 (FRCDCGTLFSRKDSFISHRSFCDV) form a CCHC-type 2; atypical zinc finger. Residues 178 to 190 (RKDSFISHRSFCD) form an SHR-binding region. The span at 248 to 263 (FGQKFTNSNPTQQQPN) shows a compositional bias: polar residues. The tract at residues 248–280 (FGQKFTNSNPTQQQPNALALSSPPSPRSTSDSV) is disordered.

It localises to the nucleus. Its function is as follows. Probable transcription factor. The polypeptide is Protein indeterminate-domain 13 (Arabidopsis thaliana (Mouse-ear cress)).